The following is a 357-amino-acid chain: 39 kDa FK506-binding nuclear protein (357 aa).

The residue at position 92 (Ser92) is a Phosphoserine. The segment at 113 to 251 (KNSKKSEDDE…ASKDPRTITG (139 aa)) is disordered. Positions 120–182 (DDEDENESGE…QDSDDSEAEE (63 aa)) are enriched in acidic residues. Residues Ser193 and Ser197 each carry the phosphoserine modification. The segment covering 222–237 (EKPEAKKEQPKAKEPA) has biased composition (basic and acidic residues). In terms of domain architecture, PPIase FKBP-type spans 269–357 (GKRVSVYYIG…VFEVELKAVH (89 aa)).

This sequence belongs to the FKBP-type PPIase family. As to expression, ubiquitously expressed, highest levels in ovary.

Its subcellular location is the nucleus. The enzyme catalyses [protein]-peptidylproline (omega=180) = [protein]-peptidylproline (omega=0). Functionally, PPIases accelerate the folding of proteins. May function in a signal transduction cascade during early development. This chain is 39 kDa FK506-binding nuclear protein, found in Drosophila melanogaster (Fruit fly).